The sequence spans 135 residues: Transcription antitermination protein NusB (135 aa).

This sequence belongs to the NusB family.

Its function is as follows. Involved in transcription antitermination. Required for transcription of ribosomal RNA (rRNA) genes. Binds specifically to the boxA antiterminator sequence of the ribosomal RNA (rrn) operons. The polypeptide is Transcription antitermination protein NusB (Wolinella succinogenes (strain ATCC 29543 / DSM 1740 / CCUG 13145 / JCM 31913 / LMG 7466 / NCTC 11488 / FDC 602W) (Vibrio succinogenes)).